The primary structure comprises 361 residues: Mitochondrial import receptor subunit TOM40 homolog (361 aa).

Over residues 1–10 the composition is skewed to low complexity; the sequence is MGNVLAASSP. The tract at residues 1–71 is disordered; it reads MGNVLAASSP…TASASGAAED (71 aa). The span at 11-36 shows a compositional bias: pro residues; sequence PAGPPPPPAPALVGLPPPPPSPPGFT. 2 stretches are compositionally biased toward low complexity: residues 37 to 52 and 59 to 71; these read LPPL…STSR and GAAT…AAED.

It belongs to the Tom40 family. Forms part of the preprotein translocase complex of the outer mitochondrial membrane (TOM complex) which consists of at least 7 different proteins (TOMM5, TOMM6, TOMM7, TOMM20, TOMM22, TOMM40 and TOMM70). Interacts with mitochondrial targeting sequences. Interacts with TIMM29; linking the TIM22 complex to the TOM complex. Forms a complex with BCAP31 (via C-terminus) which mediates the translocation of components of the mitochondrial membrane respiratory chain NADH dehydrogenase (Complex I) from the cytosol to the mitochondria. Interacts (via N-terminus) with CYP1A1 (via mitochondrial targeting signal); this interaction is required for CYP1A1 translocation across the mitochondrial outer membrane.

Its subcellular location is the mitochondrion outer membrane. Channel-forming protein essential for import of protein precursors into mitochondria. Plays a role in the assembly of the mitochondrial membrane respiratory chain NADH dehydrogenase (Complex I) by forming a complex with BCAP31 and mediating the translocation of Complex I components from the cytosol to the mitochondria. This Homo sapiens (Human) protein is Mitochondrial import receptor subunit TOM40 homolog (TOMM40).